A 390-amino-acid polypeptide reads, in one-letter code: F-box/kelch-repeat protein At4g39753 (390 aa).

Positions 1–16 (MVTFWAETAASAATTS) are enriched in low complexity. The interval 1–33 (MVTFWAETAASAATTSKGEPPSKKRKTNPSPPP) is disordered. The region spanning 32 to 79 (PPSLLSLPDVLILNCLSRIPKSYYPKLSIVSKTFRDLIISIDLNHARF) is the F-box domain. 4 Kelch repeats span residues 139 to 192 (PLLV…VFDR), 193 to 243 (KIYV…MIQG), 245 to 286 (FYVR…WYSC), and 288 to 321 (PNSF…LIET).

The protein is F-box/kelch-repeat protein At4g39753 of Arabidopsis thaliana (Mouse-ear cress).